Here is a 219-residue protein sequence, read N- to C-terminus: MGQKVNPKGLRVGIIRDWEGRWFADKNYLELLHEDLKVRKFVKTKLQQAGVPKVEIERAANRVKVSIYAAKPGIVIGRGGTEVENLRKQLEAMTGKQVAVNIVEVKKPELDAQLVAESVAQQLEKRVSFRRAMKQTVQRTMRQGGQGIKISCSGRLGGAEIARTEWYSEGKVPLHTLRADIDYGFAEANTTYGKIGVKVWIYKGEVLPAKKVAQVEGGK.

The KH type-2 domain occupies 38–106; that stretch reads VRKFVKTKLQ…QVAVNIVEVK (69 aa).

The protein belongs to the universal ribosomal protein uS3 family. Part of the 30S ribosomal subunit. Forms a tight complex with proteins S10 and S14.

Functionally, binds the lower part of the 30S subunit head. Binds mRNA in the 70S ribosome, positioning it for translation. The polypeptide is Small ribosomal subunit protein uS3 (Desulfitobacterium hafniense (strain DSM 10664 / DCB-2)).